We begin with the raw amino-acid sequence, 416 residues long: Enterobactin exporter EntS (416 aa).

Residues 1–21 lie on the Cytoplasmic side of the membrane; it reads MNKQSWLLNLSLLKTHPAFRA. A helical transmembrane segment spans residues 22-42; the sequence is VFLARFISIVSLGLLGVAVPV. Residues 43-55 lie on the Periplasmic side of the membrane; that stretch reads QIQMMTHSTWQVG. The chain crosses the membrane as a helical span at residues 56–76; that stretch reads LSVTLTGGAMFVGLMVGGVLA. Over 77–83 the chain is Cytoplasmic; it reads DRYERKK. The chain crosses the membrane as a helical span at residues 84-104; sequence VILLARGTCGIGFIGLCLNAL. The Periplasmic segment spans residues 105–109; sequence LPEPS. Residues 110–130 form a helical membrane-spanning segment; sequence LLAIYLLGLWDGFFASLGVTA. At 131 to 156 the chain is on the cytoplasmic side; sequence LLAATPALVGRENLMQAGALTMLTVR. A helical membrane pass occupies residues 157–177; the sequence is LGSVISPMIGGLLLATGGVAW. A topological domain (periplasmic) is located at residue Asn-178. A helical transmembrane segment spans residues 179-199; that stretch reads YGLAAAGTFITLLPLLSLPAL. Residues 200 to 218 lie on the Cytoplasmic side of the membrane; the sequence is PPPPQPREHPLKSLLAGFR. The chain crosses the membrane as a helical span at residues 219-239; it reads FLLASPLVGGIALLGGLLTMA. Residues 240 to 256 lie on the Periplasmic side of the membrane; it reads SAVRVLYPALADNWQMS. A helical transmembrane segment spans residues 257 to 277; it reads AAEIGFLYAAIPLGAAIGALT. Over 278-287 the chain is Cytoplasmic; the sequence is SGKLAHSARP. A helical membrane pass occupies residues 288 to 307; it reads GLLMLLSTLGSFLAIGLFGL. The Periplasmic portion of the chain corresponds to 308 to 313; it reads MPMWIL. The helical transmembrane segment at 314-336 threads the bilayer; sequence GVVCLALFGWLSAVSSLLQYTML. The Cytoplasmic portion of the chain corresponds to 337 to 356; that stretch reads QTQTPEAMLGRINGLWTAQN. The chain crosses the membrane as a helical span at residues 357–377; sequence VTGDAIGAALLGGLGAMMTPV. Residue Ala-378 is a topological domain, periplasmic. Residues 379 to 399 traverse the membrane as a helical segment; it reads SASASGFGLLIIGVLLLLVLV. Residues 400-416 are Cytoplasmic-facing; that stretch reads ELRRFRQTPPQVTASDS.

This sequence belongs to the major facilitator superfamily. EntS (TC 2.A.1.38) family.

The protein resides in the cell inner membrane. Functionally, component of an export pathway for enterobactin. In Shigella boydii serotype 18 (strain CDC 3083-94 / BS512), this protein is Enterobactin exporter EntS.